The chain runs to 505 residues: Buccalin (505 aa).

A signal peptide spans Met1–Ala25. Residues Glu26–Arg62 constitute a propeptide that is removed on maturation. The residue at position 74 (Val74) is a Valine amide. Leucine amide is present on residues Leu88 and Leu102. The residue at position 106 (Gln106) is a Pyrrolidone carboxylic acid. Ile116 bears the Isoleucine amide mark. 16 positions are modified to leucine amide: Leu129, Leu143, Leu157, Leu171, Leu185, Leu199, Leu213, Leu227, Leu241, Leu254, Leu267, Leu281, Leu294, Leu307, Leu321, and Leu335. Glu349 is modified (glutamic acid 1-amide). Leucine amide occurs at positions 363, 377, 391, 405, 419, and 433. Residues Ile447 and Ile461 each carry the isoleucine amide modification. Gln465 carries the post-translational modification Pyrrolidone carboxylic acid. The disordered stretch occupies residues Ser472 to Leu505. A Leucine amide modification is found at Leu475. Positions Val488–Leu505 are enriched in basic and acidic residues. Positions Ser495–Leu505 are excised as a propeptide.

In terms of tissue distribution, cholinergic motor neuron B15 innervating buccal muscles in Aplysia.

It localises to the secreted. In terms of biological role, modulatory neuropeptide, acting presynaptically on nerve terminals to inhibit acetylcholine release. This Aplysia californica (California sea hare) protein is Buccalin.